Consider the following 908-residue polypeptide: NADH-quinone oxidoreductase subunit G (908 aa).

Residues 2–83 (ATIHVDGKEY…GTFISIDDEE (82 aa)) enclose the 2Fe-2S ferredoxin-type domain. Residues Cys-34, Cys-45, Cys-48, and Cys-67 each coordinate [2Fe-2S] cluster. A 4Fe-4S His(Cys)3-ligated-type domain is found at 83-122 (EAKQFRESVVEWLMTNHPHDCPVCEEGGNCHLQDMTVMTG). [4Fe-4S] cluster contacts are provided by His-99, Cys-103, Cys-106, Cys-112, Cys-151, Cys-154, Cys-157, Cys-201, Cys-228, Cys-231, Cys-235, and Cys-263. Positions 221-277 (MQFAPSICQQCSIGCNISPGERYGELRRIENRYNGTVNHYFLCDRGRFGYGYVNLKD) constitute a 4Fe-4S Mo/W bis-MGD-type domain.

It belongs to the complex I 75 kDa subunit family. Composed of 13 different subunits. Subunits NuoCD, E, F, and G constitute the peripheral sector of the complex. The cofactor is [2Fe-2S] cluster. [4Fe-4S] cluster serves as cofactor.

It catalyses the reaction a quinone + NADH + 5 H(+)(in) = a quinol + NAD(+) + 4 H(+)(out). In terms of biological role, NDH-1 shuttles electrons from NADH, via FMN and iron-sulfur (Fe-S) centers, to quinones in the respiratory chain. The immediate electron acceptor for the enzyme in this species is believed to be ubiquinone. Couples the redox reaction to proton translocation (for every two electrons transferred, four hydrogen ions are translocated across the cytoplasmic membrane), and thus conserves the redox energy in a proton gradient. This Escherichia coli O6:H1 (strain CFT073 / ATCC 700928 / UPEC) protein is NADH-quinone oxidoreductase subunit G (nuoG).